The chain runs to 664 residues: Glycine--tRNA ligase beta subunit (664 aa).

The protein belongs to the class-II aminoacyl-tRNA synthetase family. Tetramer of two alpha and two beta subunits.

It localises to the cytoplasm. The catalysed reaction is tRNA(Gly) + glycine + ATP = glycyl-tRNA(Gly) + AMP + diphosphate. The protein is Glycine--tRNA ligase beta subunit of Rickettsia felis (strain ATCC VR-1525 / URRWXCal2) (Rickettsia azadi).